A 363-amino-acid polypeptide reads, in one-letter code: Glutamate--cysteine ligase (363 aa).

This sequence belongs to the glutamate--cysteine ligase type 2 family. YbdK subfamily.

It carries out the reaction L-cysteine + L-glutamate + ATP = gamma-L-glutamyl-L-cysteine + ADP + phosphate + H(+). Catalyzes the synthesis of gamma-glutamylcysteine (gamma-GC), the main low-molecular-weight thiol compound instead of glutathione in halophilic archaea. The sequence is that of Glutamate--cysteine ligase from Haloquadratum walsbyi (strain DSM 16790 / HBSQ001).